We begin with the raw amino-acid sequence, 294 residues long: Bifunctional protein FolD (294 aa).

NADP(+) is bound by residues 176-178, Ser-201, and Ile-242; that span reads GAS.

The protein belongs to the tetrahydrofolate dehydrogenase/cyclohydrolase family. In terms of assembly, homodimer.

The enzyme catalyses (6R)-5,10-methylene-5,6,7,8-tetrahydrofolate + NADP(+) = (6R)-5,10-methenyltetrahydrofolate + NADPH. It catalyses the reaction (6R)-5,10-methenyltetrahydrofolate + H2O = (6R)-10-formyltetrahydrofolate + H(+). It participates in one-carbon metabolism; tetrahydrofolate interconversion. Catalyzes the oxidation of 5,10-methylenetetrahydrofolate to 5,10-methenyltetrahydrofolate and then the hydrolysis of 5,10-methenyltetrahydrofolate to 10-formyltetrahydrofolate. The sequence is that of Bifunctional protein FolD from Bordetella petrii (strain ATCC BAA-461 / DSM 12804 / CCUG 43448).